A 727-amino-acid chain; its full sequence is Catalase-peroxidase (727 aa).

The segment at Met-1–Arg-26 is disordered. The segment at residues Trp-97–Tyr-219 is a cross-link (tryptophyl-tyrosyl-methioninium (Trp-Tyr) (with M-245)). Catalysis depends on His-98, which acts as the Proton acceptor. Positions Tyr-219–Met-245 form a cross-link, tryptophyl-tyrosyl-methioninium (Tyr-Met) (with W-97). Residue His-260 coordinates heme b.

The protein belongs to the peroxidase family. Peroxidase/catalase subfamily. As to quaternary structure, homodimer or homotetramer. Heme b serves as cofactor. Formation of the three residue Trp-Tyr-Met cross-link is important for the catalase, but not the peroxidase activity of the enzyme.

The enzyme catalyses H2O2 + AH2 = A + 2 H2O. It catalyses the reaction 2 H2O2 = O2 + 2 H2O. Bifunctional enzyme with both catalase and broad-spectrum peroxidase activity. The polypeptide is Catalase-peroxidase (Allorhizobium ampelinum (strain ATCC BAA-846 / DSM 112012 / S4) (Agrobacterium vitis (strain S4))).